The chain runs to 888 residues: MNSREIRQSFLDFFDRKGHTIVRSAPVIPLDDPTLLFTNAGMNQFKDVFLDKGTRPYVRAADTQKCIRASGKHNDLEDVGRDTYHHTFFEMLGNWSFGDYYKKEAISWAWELLTSVWHLPKERLYATVYYDDEESYLLWQEETDIPHDHIIKFDEKDNFWEMGETGPCGPCSEIHIDLTEDGSGKPLVNAGDYRVIELWNLVFIQYNRQADGRLEPLPQKHVDTGMGFERVCAVMQGKASNYDTDVFRPLFDRITEITGVSYNASLDDPSDIAMRVLADHARTLTFALTDGAMPSNEGRGYVLRRILRRALRYSKTLGCSEPLLYRLVETLAASMGDVFPELRKQQQAVSRIIRAEEESFLATLDRGIEIFNELIAAVRSRGTTVVSGDDAFRLYDTFGFPLDLTRLMAAEAGFEVDEEGFDRCMKEQKTRARQDRRDKQHLKGDEGEWTWFSAERTSVFTGYHSLEELASITGVSIFSDRLLVVLDRTPFYAESGGQCGDRGWIETAAYRLRVSDTRKDGDMIVHLVTEVRDSVSDGAISPADLSFDEGKLACRASVDRSDRQGTERNHTATHLLHAALRRTLGQHVQQKGSFVSSERLRFDFSHFARLTSEELAIVESEVNEQIRSAEPVVKHQDIPYDEAIARGALAFFGDKYADRVRVVEIAGLSVELCGGTHVDSIGQIGLFKIVSESSVASGVRRIEALTGKAAEVLLWKEYRELQDIRQMLKLKADEEVIGRIAELADSKKELEKQLQVYRTEALSGILQRSLDAAESVGSIRFMTLRLEHVDQDSLRQAVLALREKDPASTGLLCTEEDGKVSLTAFAGERAVGEFGLDAGKLVREAAAFVRGGGGGKPEFATAGGKDPEGIQKAFDSFAASVREKVSAK.

Zn(2+) is bound by residues His570, His574, Cys673, and His677.

Belongs to the class-II aminoacyl-tRNA synthetase family. Zn(2+) is required as a cofactor.

The protein localises to the cytoplasm. It carries out the reaction tRNA(Ala) + L-alanine + ATP = L-alanyl-tRNA(Ala) + AMP + diphosphate. Catalyzes the attachment of alanine to tRNA(Ala) in a two-step reaction: alanine is first activated by ATP to form Ala-AMP and then transferred to the acceptor end of tRNA(Ala). Also edits incorrectly charged Ser-tRNA(Ala) and Gly-tRNA(Ala) via its editing domain. The chain is Alanine--tRNA ligase from Chlorobium phaeobacteroides (strain DSM 266 / SMG 266 / 2430).